Consider the following 222-residue polypeptide: UPF0173 metal-dependent hydrolase Kcr_0055 (222 aa).

It belongs to the UPF0173 family.

The protein is UPF0173 metal-dependent hydrolase Kcr_0055 of Korarchaeum cryptofilum (strain OPF8).